The following is a 72-amino-acid chain: Heat-stable enterotoxin A3/A4 (72 aa).

The first 19 residues, 1–19 (MKKSILFIFLSVLSFSPFA), serve as a signal peptide directing secretion. A propeptide spanning residues 20 to 53 (QDAKPVESSKEKITLESKKCNIAKKSNKSGPESM) is cleaved from the precursor. Cystine bridges form between C59/C64, C60/C68, and C63/C71.

It belongs to the heat-stable enterotoxin family.

It is found in the secreted. In terms of biological role, toxin which activates the particulate form of guanylate cyclase and increases cyclic GMP levels within the host intestinal epithelial cells. The chain is Heat-stable enterotoxin A3/A4 (sta3) from Escherichia coli.